The primary structure comprises 397 residues: Protein-glutamate methylesterase/protein-glutamine glutaminase of group 2 operon (397 aa).

The Response regulatory domain occupies 21-139; it reads RVMIVDDSVV…EASAADTFHH (119 aa). Residue Asp72 is modified to 4-aspartylphosphate. Residues 199–388 form the CheB-type methylesterase domain; it reads PFSTLAPKVL…LPLNQIGAKV (190 aa). Residues Ser213, His241, and Asp337 contribute to the active site.

It belongs to the CheB family. Phosphorylated by CheA. Phosphorylation of the N-terminal regulatory domain activates the methylesterase activity.

It is found in the cytoplasm. It catalyses the reaction [protein]-L-glutamate 5-O-methyl ester + H2O = L-glutamyl-[protein] + methanol + H(+). It carries out the reaction L-glutaminyl-[protein] + H2O = L-glutamyl-[protein] + NH4(+). Involved in chemotaxis. Part of a chemotaxis signal transduction system that modulates chemotaxis in response to various stimuli. Catalyzes the demethylation of specific methylglutamate residues introduced into the chemoreceptors (methyl-accepting chemotaxis proteins or MCP) by CheR. Also mediates the irreversible deamidation of specific glutamine residues to glutamic acid. In Bradyrhizobium diazoefficiens (strain JCM 10833 / BCRC 13528 / IAM 13628 / NBRC 14792 / USDA 110), this protein is Protein-glutamate methylesterase/protein-glutamine glutaminase of group 2 operon.